An 868-amino-acid chain; its full sequence is Rifampicin phosphotransferase (868 aa).

The ATP-binding stretch occupies residues 5-317 (TERYVLDLQE…FHIVQSRPIT (313 aa)). The ATP site is built by lysine 26, arginine 120, glycine 135, threonine 139, glutamine 186, glutamate 300, glutamine 312, and arginine 314. The tract at residues 330–755 (NHVYVSVGHQ…TSDGEALTGA (426 aa)) is rifampicin-binding. The disordered stretch occupies residues 410–430 (FVPSLPDAPPAGPRAGAAPEP). The interval 768–866 (GLPVSTGTVE…VHGTDGYIEI (99 aa)) is swivel phosphohistidine. The active-site Tele-phosphohistidine intermediate is histidine 826.

It belongs to the rifampicin phosphotransferase family.

It carries out the reaction rifampicin + ATP + H2O = 21-phosphorifampicin + AMP + phosphate + 2 H(+). Functionally, catalyzes the phosphorylation of rifampicin, also known as rifampin (RIF), leading to its inactivation. Confers high level resistance to a variety of clinically used rifamycin antibiotics. Does not show phosphoenolpyruvate (PEP) synthase activity. This is Rifampicin phosphotransferase from Streptomyces sviceus (strain ATCC 29083 / DSM 924 / JCM 4929 / NBRC 13980 / NCIMB 11184 / NRRL 5439 / UC 5370).